We begin with the raw amino-acid sequence, 660 residues long: Bifunctional polymyxin resistance protein ArnA (660 aa).

Residues 1-304 form a formyltransferase ArnAFT region; that stretch reads MKTVVFAYHD…TLGLVQGSRL (304 aa). Position 86–88 (86–88) interacts with (6R)-10-formyltetrahydrofolate; that stretch reads HLI. H104 serves as the catalytic Proton donor; for formyltransferase activity. (6R)-10-formyltetrahydrofolate contacts are provided by residues R114 and 136–140; that span reads VKRAD. The segment at 314 to 660 is dehydrogenase ArnADH; sequence RRTRVLILGV…RTVDLTDKPS (347 aa). NAD(+) contacts are provided by residues D347 and 368 to 369; that span reads DI. UDP-alpha-D-glucuronate-binding positions include A393, Y398, and 432-433; that span reads TS. E434 acts as the Proton acceptor; for decarboxylase activity in catalysis. UDP-alpha-D-glucuronate is bound by residues R460, N492, 526–535, and Y613; that span reads KLIDGGKQKR. The active-site Proton donor; for decarboxylase activity is the R619.

This sequence in the N-terminal section; belongs to the Fmt family. UDP-L-Ara4N formyltransferase subfamily. The protein in the C-terminal section; belongs to the NAD(P)-dependent epimerase/dehydratase family. UDP-glucuronic acid decarboxylase subfamily. Homohexamer, formed by a dimer of trimers.

It catalyses the reaction UDP-alpha-D-glucuronate + NAD(+) = UDP-beta-L-threo-pentopyranos-4-ulose + CO2 + NADH. It carries out the reaction UDP-4-amino-4-deoxy-beta-L-arabinose + (6R)-10-formyltetrahydrofolate = UDP-4-deoxy-4-formamido-beta-L-arabinose + (6S)-5,6,7,8-tetrahydrofolate + H(+). Its pathway is nucleotide-sugar biosynthesis; UDP-4-deoxy-4-formamido-beta-L-arabinose biosynthesis; UDP-4-deoxy-4-formamido-beta-L-arabinose from UDP-alpha-D-glucuronate: step 1/3. It functions in the pathway nucleotide-sugar biosynthesis; UDP-4-deoxy-4-formamido-beta-L-arabinose biosynthesis; UDP-4-deoxy-4-formamido-beta-L-arabinose from UDP-alpha-D-glucuronate: step 3/3. The protein operates within bacterial outer membrane biogenesis; lipopolysaccharide biosynthesis. Its function is as follows. Bifunctional enzyme that catalyzes the oxidative decarboxylation of UDP-glucuronic acid (UDP-GlcUA) to UDP-4-keto-arabinose (UDP-Ara4O) and the addition of a formyl group to UDP-4-amino-4-deoxy-L-arabinose (UDP-L-Ara4N) to form UDP-L-4-formamido-arabinose (UDP-L-Ara4FN). The modified arabinose is attached to lipid A and is required for resistance to polymyxin and cationic antimicrobial peptides. The sequence is that of Bifunctional polymyxin resistance protein ArnA from Escherichia coli (strain K12 / MC4100 / BW2952).